The primary structure comprises 596 residues: Elongation factor 4 (596 aa).

A tr-type G domain is found at 2 to 184; that stretch reads KQIRNFSIIA…VIVAKIPPPE (183 aa). Residues 14 to 19 and 131 to 134 contribute to the GTP site; these read DHGKST and NKID.

This sequence belongs to the TRAFAC class translation factor GTPase superfamily. Classic translation factor GTPase family. LepA subfamily.

Its subcellular location is the cell inner membrane. The catalysed reaction is GTP + H2O = GDP + phosphate + H(+). Its function is as follows. Required for accurate and efficient protein synthesis under certain stress conditions. May act as a fidelity factor of the translation reaction, by catalyzing a one-codon backward translocation of tRNAs on improperly translocated ribosomes. Back-translocation proceeds from a post-translocation (POST) complex to a pre-translocation (PRE) complex, thus giving elongation factor G a second chance to translocate the tRNAs correctly. Binds to ribosomes in a GTP-dependent manner. The sequence is that of Elongation factor 4 from Shewanella baltica (strain OS223).